A 454-amino-acid chain; its full sequence is Jacalin-related lectin 37 (454 aa).

The region spanning S295–P438 is the Jacalin-type lectin domain.

The protein belongs to the jacalin lectin family.

The protein is Jacalin-related lectin 37 (JAL37) of Arabidopsis thaliana (Mouse-ear cress).